The following is a 98-amino-acid chain: Guanine nucleotide-binding protein subunit gamma 1 (98 aa).

A G protein gamma domain is found at 19 to 98 (GKHRILAELA…GGEGCRCLIL (80 aa)). Residues 20–50 (KHRILAELARVEQEVAFLEKELKEVENTDIV) are a coiled coil. Residues 88–94 (NGGEGCR) form a regulates lipidation and cell membrane subcellular localization region. Cysteine 93 carries the S-palmitoyl cysteine lipid modification. Residue cysteine 95 is modified to Cysteine methyl ester. Cysteine 95 carries the S-farnesyl cysteine lipid modification. A propeptide spans 96–98 (LIL) (removed in mature form).

G proteins are composed of 3 units, alpha, beta and gamma. Interacts with the beta subunit GB1. The dimer GB1-GG1 interacts with NDL1, NDL2 and NDL3. Binds to NUDT7. As to expression, mostly expressed in seedlings (especially at the hypocotyl/root junction), young cauline leaves, open flowers, and floral stems, and, to a lower extent, in roots (restricted to the stele), rosette leaves (restricted to veins), siliques, and unopened floral buds. Also present in hydathods.

It localises to the cell membrane. It is found in the golgi apparatus membrane. The protein resides in the golgi apparatus. The protein localises to the trans-Golgi network membrane. Its subcellular location is the cytoplasm. Its function is as follows. Guanine nucleotide-binding proteins (G proteins) are involved as a modulator or transducer in various transmembrane signaling systems. The beta and gamma chains are required for the GTPase activity, for replacement of GDP by GTP, and for G protein-effector interaction. Involved in the abscisic acid (ABA) and ethylene signaling pathways. Regulates acropetal transport of auxin (IAA) in roots and hypocotyls, and thus modulates root architecture (e.g. lateral root formation). The heterotrimeric G-protein controls defense responses to necrotrophic and vascular fungi probably by modulating cell wall-related genes expression; involved in resistance to fungal pathogens such as Alternaria brassicicola, Plectosphaerella cucumerina and Fusarium oxysporum. In Arabidopsis thaliana (Mouse-ear cress), this protein is Guanine nucleotide-binding protein subunit gamma 1 (GG1).